The primary structure comprises 462 residues: Protoheme IX farnesyltransferase, mitochondrial (462 aa).

Residues 1–30 (MSYFPRTYAHLMRNVLAHNKGNIYLQIGTQ) constitute a mitochondrion transit peptide. A run of 7 helical transmembrane segments spans residues 158–178 (TILV…PASV), 234–254 (LIGT…VAIL), 274–294 (IINT…GWAA), 298–318 (LSHP…FPHF), 352–372 (YSIL…TDWY), 373–393 (YQID…KFYW), and 425–445 (FMAS…HKKG).

The protein belongs to the UbiA prenyltransferase family. Forms ~370 kDa homooligomeric complexes.

It is found in the mitochondrion. The protein localises to the mitochondrion membrane. The catalysed reaction is heme b + (2E,6E)-farnesyl diphosphate + H2O = Fe(II)-heme o + diphosphate. It functions in the pathway porphyrin-containing compound metabolism; heme O biosynthesis; heme O from protoheme: step 1/1. Positively regulated by the hydroxylated intermediate (heme I) formed at the subsequent step, or by HAS/COX15 itself. Catalyzes the first reaction in the biosynthesis of heme A, a prosthetic group of mitochondrial cytochrome c oxidase (CcO). Heme A is synthesized from heme B by two sequential enzymatic reactions catalyzed by heme O synthase (HOS/COX10) and heme A synthase (HAS/COX15). HOS converts heme B (protoheme IX) to heme O by substitution of the vinyl group on carbon 2 of heme B porphyrin ring with a hydroxyethyl farnesyl side group. The protein is Protoheme IX farnesyltransferase, mitochondrial (COX10) of Saccharomyces cerevisiae (strain ATCC 204508 / S288c) (Baker's yeast).